The sequence spans 724 residues: Ribosomal RNA processing protein 1 homolog B (724 aa).

Residues 331 to 576 (NGAPLSSAED…SKKKKKTMKL (246 aa)) are disordered. Phosphoserine is present on residues Ser-336 and Ser-370. A compositionally biased stretch (basic residues) spans 373 to 386 (HIHKKKRKKRKRSH). Phosphoserine is present on residues Ser-432 and Ser-438. Basic residues predominate over residues 448–461 (HNKRKRPRKKKLRA). Low complexity predominate over residues 483-496 (SGHSQSSAAHISSS). Ser-494 carries the phosphoserine modification. Polar residues-rich tracts occupy residues 513–528 (DSSSDLPVQKSGTPTS) and 548–564 (KTASSTLDPCDPSSQKP). Position 618 is an N6-acetyllysine (Lys-618). The disordered stretch occupies residues 625 to 649 (AKNSSATRPQGPAGQLNKTPSSSKK). Positions 640–649 (LNKTPSSSKK) are enriched in polar residues. Ser-668 and Ser-672 each carry phosphoserine. The residue at position 678 (Arg-678) is a Citrulline. The disordered stretch occupies residues 687–724 (PLHGVLKTATSSPASTPLSPMRLPATTPKRRPRAADFF). At Thr-694 the chain carries Phosphothreonine. The span at 694–706 (TATSSPASTPLSP) shows a compositional bias: low complexity. A phosphoserine mark is found at Ser-698 and Ser-701.

Belongs to the RRP1 family. In terms of assembly, interacts with the transcriptional activator E2F1. Interacts with serine/threonine-protein phosphatase PP1 subunits PPP1CB and PPP1CC but not with PPP1CA. Interacts with 60S ribosomal proteins RPL5 and RPL27, ribosomal processing protein RRP1/NNP1 and other nucleolar proteins including NOP2/NOL1 and FBL. Also interacts with nucleolar protein NPM1/B23. Interacts with splicing factor SRSF1 and LUC7L3/CROP. Interacts with GTPase activator SIPA1. Interacts with H1-10, NCL, PARP1, TRIM28 and YBX3. Post-translationally, citrullinated by PADI4.

It localises to the nucleus. The protein localises to the nucleolus. It is found in the nucleoplasm. Its subcellular location is the chromosome. In terms of biological role, positively regulates DNA damage-induced apoptosis by acting as a transcriptional coactivator of proapoptotic target genes of the transcriptional activator E2F1. Likely to play a role in ribosome biogenesis by targeting serine/threonine protein phosphatase PP1 to the nucleolus. Involved in regulation of mRNA splicing. Inhibits SIPA1 GTPase activity. Involved in regulating expression of extracellular matrix genes. Associates with chromatin and may play a role in modulating chromatin structure. This Mus musculus (Mouse) protein is Ribosomal RNA processing protein 1 homolog B (Rrp1b).